The following is a 351-amino-acid chain: Tsukushi-A (351 aa).

Residues 1–17 (MALSSWIFFLLVHGIVG) form the signal peptide. 9 LRR repeats span residues 59–82 (PLDT…VLSG), 85–108 (YTTL…TFSK), 109–132 (LRYL…SFLY), 134–155 (RLTE…AFTL), 158–181 (QGRS…AERP), 182–203 (VPNI…DLHG), 204–226 (IPLR…SFLG), 252–276 (LTSL…MFFG), and 277–300 (LKAL…IMLH).

In terms of assembly, interacts with bmp4. Interacts with dll1 (via extracellular region). Interacts with fgf8; inhibits fgf8 signaling. Interacts with nodal2/Xnr2; enhances nodal2 activity. In terms of tissue distribution, during embryogenesis, localized to the animal hemisphere during late blastula and gastrula stages. At stage 10, expression is also detected around the dorsal blastopore lip. Expressed in the mandibular crest segment, branchial crest segment and differentiating somites at stage 21/22. Expressed in the germ ring including the shield at shield stage and in the tailbud at the 10-somite stage. At the early neurula stage (stage 13), expression is hardly detectable in the presumptive neural plate region, and restricted to the non-neural ectoderm where its levels increase by stage 14, especially in the presumptive anterior neural fold. Also expressed in the prospective cranial neural crest. At the early tailbud stage (stage 23), expressed in cranial neural crest cells, the dorsal retina and the lens placode.

The protein localises to the secreted. Functionally, contributes to various developmental events through its interactions with multiple signaling pathways. Dorsalizing factor which functions as an inhibitor of bone morphogenetic proteins (BMP) during gastrulation. Promotes dll1-dependent activation of Notch signaling and is required for neural crest formation. Induces endoderm and dorsal mesoderm formation by enhancing nodal2/Xnr2 activity while inhibiting ventrolateral mesoderm formation through inhibition of fgf8. This chain is Tsukushi-A, found in Xenopus laevis (African clawed frog).